A 346-amino-acid polypeptide reads, in one-letter code: [LysW]-lysine/[LysW]-ornithine hydrolase (346 aa).

H68 provides a ligand contact to Zn(2+). The active site involves D70. D92 contributes to the Zn(2+) binding site. E122 serves as the catalytic Proton acceptor. Residues E123, E146, and H317 each contribute to the Zn(2+) site.

The protein belongs to the peptidase M20A family. LysK subfamily. The cofactor is Zn(2+). Co(2+) is required as a cofactor.

It localises to the cytoplasm. It carries out the reaction [amino-group carrier protein]-C-terminal-gamma-(L-lysyl)-L-glutamate + H2O = [amino-group carrier protein]-C-terminal-L-glutamate + L-lysine. The enzyme catalyses [amino-group carrier protein]-C-terminal-gamma-(L-ornithyl)-L-glutamate + H2O = [amino-group carrier protein]-C-terminal-L-glutamate + L-ornithine. It functions in the pathway amino-acid biosynthesis; L-lysine biosynthesis via AAA pathway; L-lysine from L-alpha-aminoadipate (Thermus route): step 5/5. Its pathway is amino-acid biosynthesis; L-arginine biosynthesis. Catalyzes the release of L-lysine from [LysW]-gamma-L-lysine and the release of L-ornithine from [LysW]-L-ornithine. This chain is [LysW]-lysine/[LysW]-ornithine hydrolase, found in Saccharolobus islandicus (strain M.16.4 / Kamchatka #3) (Sulfolobus islandicus).